Reading from the N-terminus, the 297-residue chain is 4-hydroxy-tetrahydrodipicolinate synthase (297 aa).

Threonine 49 contributes to the pyruvate binding site. The active-site Proton donor/acceptor is tyrosine 137. Lysine 166 (schiff-base intermediate with substrate) is an active-site residue. Pyruvate is bound at residue isoleucine 208.

This sequence belongs to the DapA family. Homotetramer; dimer of dimers.

It localises to the cytoplasm. The catalysed reaction is L-aspartate 4-semialdehyde + pyruvate = (2S,4S)-4-hydroxy-2,3,4,5-tetrahydrodipicolinate + H2O + H(+). The protein operates within amino-acid biosynthesis; L-lysine biosynthesis via DAP pathway; (S)-tetrahydrodipicolinate from L-aspartate: step 3/4. Functionally, catalyzes the condensation of (S)-aspartate-beta-semialdehyde [(S)-ASA] and pyruvate to 4-hydroxy-tetrahydrodipicolinate (HTPA). This chain is 4-hydroxy-tetrahydrodipicolinate synthase, found in Parabacteroides distasonis (strain ATCC 8503 / DSM 20701 / CIP 104284 / JCM 5825 / NCTC 11152).